The primary structure comprises 460 residues: Argininosuccinate lyase (460 aa).

The protein belongs to the lyase 1 family. Argininosuccinate lyase subfamily.

It is found in the cytoplasm. It catalyses the reaction 2-(N(omega)-L-arginino)succinate = fumarate + L-arginine. It functions in the pathway amino-acid biosynthesis; L-arginine biosynthesis; L-arginine from L-ornithine and carbamoyl phosphate: step 3/3. The protein is Argininosuccinate lyase of Mannheimia succiniciproducens (strain KCTC 0769BP / MBEL55E).